Here is a 129-residue protein sequence, read N- to C-terminus: Mite allergen Blo t 21 (129 aa).

A signal peptide spans 1 to 16; sequence MKFIIALAALIAVACA.

Belongs to the mite group 5 allergen family. In terms of assembly, may exist as homodimer and homotrimer. As to expression, midgut and hindgut contents as well as fecal pellets (at protein level).

The protein is Mite allergen Blo t 21 of Blomia tropicalis (Mite).